The primary structure comprises 149 residues: Calmodulin-1 (149 aa).

EF-hand domains are found at residues 8-43 (EQIS…LGQN), 44-79 (PTEA…KMKD), 81-116 (DSEE…LGEK), and 117-149 (LTDE…MMAK). Residues Asp21, Asp23, Asp25, Cys27, Glu32, Asp57, Asp59, Asn61, Thr63, Glu68, Asp94, Asp96, Asn98, Glu105, Asp130, Asp132, Asp134, Gln136, and Glu141 each contribute to the Ca(2+) site.

This sequence belongs to the calmodulin family. In terms of assembly, interacts with ZAR1 (via CaMBD domain). Binds to IQD1. Binds to MEE62 in a calcium-dependent manner.

Its subcellular location is the cytoplasm. The protein resides in the cell membrane. In terms of biological role, calmodulin mediates the control of a large number of enzymes, ion channels and other proteins by Ca(2+). Among the enzymes to be stimulated by the calmodulin-Ca(2+) complex are a number of protein kinases and phosphatases. The sequence is that of Calmodulin-1 (CAM1) from Arabidopsis thaliana (Mouse-ear cress).